The chain runs to 72 residues: MTKEDNIEMQGIVIDTLPNTMFRVELENKHVITAHISGKMRKNYIRILTGDKVTIELTPYDLTKGRIIFRSR.

In terms of domain architecture, S1-like spans 1 to 72 (MTKEDNIEMQ…TKGRIIFRSR (72 aa)).

Belongs to the IF-1 family. As to quaternary structure, component of the 30S ribosomal translation pre-initiation complex which assembles on the 30S ribosome in the order IF-2 and IF-3, IF-1 and N-formylmethionyl-tRNA(fMet); mRNA recruitment can occur at any time during PIC assembly.

Its subcellular location is the cytoplasm. One of the essential components for the initiation of protein synthesis. Stabilizes the binding of IF-2 and IF-3 on the 30S subunit to which N-formylmethionyl-tRNA(fMet) subsequently binds. Helps modulate mRNA selection, yielding the 30S pre-initiation complex (PIC). Upon addition of the 50S ribosomal subunit IF-1, IF-2 and IF-3 are released leaving the mature 70S translation initiation complex. In Buchnera aphidicola subsp. Schizaphis graminum (strain Sg), this protein is Translation initiation factor IF-1.